The sequence spans 445 residues: MREIVHIQAGQCGNQIGAKFWEVISDEHGIDPTGSYHGDSDLQLERINVYYNEATGNKYVPRAILVDLEPGTMDSVRSGPFGQIFRPDNFVFGQSGAGNNWAKGHYTEGAELVDSVLDVVRKESESCDCLQGFQLTHSLGGGTGSGMGTLLISKIREEYPDRIMNTFSVMPSPKVSDTVVEPYNATLSVHQLVENTDETYCIDNEALYDICFRTLKLTTPTYGDLNHLVSATMSGVTTCLRFPGQLNADLRKLAVNMVPFPRLHFFMPGFAPLTSRGSQQYRALTVPELTQQMFDSKNMMAACDPRHGRYLTVAAIFRGRMSMKEVDEQMLNVQNKNSSYFVEWIPNNVKTAVCDIPPRGLKMSATFIGNSTAIQELFKRISEQFTAMFRRKAFLHWYTGEGMDEMEFTEAESNMNDLVSEYQQYQDATADEQGEFEEEEGEDEA.

The MREI motif signature appears at 1–4 (MREI). A GTP-binding site is contributed by Gln-11. Ser-40 bears the Phosphoserine mark. A Phosphothreonine modification is found at Thr-55. At Lys-58 the chain carries N6-acetyllysine; alternate. Lys-58 is subject to N6-succinyllysine; alternate. Residue Lys-58 forms a Glycyl lysine isopeptide (Lys-Gly) (interchain with G-Cter in ubiquitin); alternate linkage. Residues Glu-69, Ser-138, Gly-142, Thr-143, and Gly-144 each contribute to the GTP site. Glu-69 provides a ligand contact to Mg(2+). Phosphoserine; by CDK1 is present on Ser-172. Residues Asn-204 and Asn-226 each coordinate GTP. Residues Thr-285 and Thr-290 each carry the phosphothreonine modification. Arg-318 is modified (omega-N-methylarginine). Lys-324 participates in a covalent cross-link: Glycyl lysine isopeptide (Lys-Gly) (interchain with G-Cter in ubiquitin). The segment at 422-445 (YQQYQDATADEQGEFEEEEGEDEA) is disordered. A compositionally biased stretch (acidic residues) spans 429 to 445 (TADEQGEFEEEEGEDEA). At Glu-438 the chain carries 5-glutamyl polyglutamate.

Belongs to the tubulin family. In terms of assembly, dimer of alpha and beta chains. A typical microtubule is a hollow water-filled tube with an outer diameter of 25 nm and an inner diameter of 15 nM. Alpha-beta heterodimers associate head-to-tail to form protofilaments running lengthwise along the microtubule wall with the beta-tubulin subunit facing the microtubule plus end conferring a structural polarity. Microtubules usually have 13 protofilaments but different protofilament numbers can be found in some organisms and specialized cells. The cofactor is Mg(2+). In terms of processing, some glutamate residues at the C-terminus are polyglycylated, resulting in polyglycine chains on the gamma-carboxyl group. Glycylation is mainly limited to tubulin incorporated into axonemes (cilia and flagella) whereas glutamylation is prevalent in neuronal cells, centrioles, axonemes, and the mitotic spindle. Both modifications can coexist on the same protein on adjacent residues, and lowering polyglycylation levels increases polyglutamylation, and reciprocally. The precise function of polyglycylation is still unclear. Some glutamate residues at the C-terminus are polyglutamylated, resulting in polyglutamate chains on the gamma-carboxyl group. Polyglutamylation plays a key role in microtubule severing by spastin (SPAST). SPAST preferentially recognizes and acts on microtubules decorated with short polyglutamate tails: severing activity by SPAST increases as the number of glutamates per tubulin rises from one to eight, but decreases beyond this glutamylation threshold. Post-translationally, phosphorylated on Ser-172 by CDK1 during the cell cycle, from metaphase to telophase, but not in interphase. This phosphorylation inhibits tubulin incorporation into microtubules.

The protein resides in the cytoplasm. Its subcellular location is the cytoskeleton. Tubulin is the major constituent of microtubules, a cylinder consisting of laterally associated linear protofilaments composed of alpha- and beta-tubulin heterodimers. Microtubules grow by the addition of GTP-tubulin dimers to the microtubule end, where a stabilizing cap forms. Below the cap, tubulin dimers are in GDP-bound state, owing to GTPase activity of alpha-tubulin. Implicated in neuronal migration. This is Tubulin beta-2B chain (TUBB2B) from Bos taurus (Bovine).